Reading from the N-terminus, the 377-residue chain is Succinyl-diaminopimelate desuccinylase (377 aa).

His71 provides a ligand contact to Zn(2+). Residue Asp73 is part of the active site. Asp102 provides a ligand contact to Zn(2+). Glu132 (proton acceptor) is an active-site residue. 3 residues coordinate Zn(2+): Glu133, Glu161, and His346.

This sequence belongs to the peptidase M20A family. DapE subfamily. In terms of assembly, homodimer. It depends on Zn(2+) as a cofactor. The cofactor is Co(2+).

It catalyses the reaction N-succinyl-(2S,6S)-2,6-diaminopimelate + H2O = (2S,6S)-2,6-diaminopimelate + succinate. Its pathway is amino-acid biosynthesis; L-lysine biosynthesis via DAP pathway; LL-2,6-diaminopimelate from (S)-tetrahydrodipicolinate (succinylase route): step 3/3. Its function is as follows. Catalyzes the hydrolysis of N-succinyl-L,L-diaminopimelic acid (SDAP), forming succinate and LL-2,6-diaminopimelate (DAP), an intermediate involved in the bacterial biosynthesis of lysine and meso-diaminopimelic acid, an essential component of bacterial cell walls. The protein is Succinyl-diaminopimelate desuccinylase of Rhizorhabdus wittichii (strain DSM 6014 / CCUG 31198 / JCM 15750 / NBRC 105917 / EY 4224 / RW1) (Sphingomonas wittichii).